Reading from the N-terminus, the 101-residue chain is Small ribosomal subunit protein uS14 (101 aa).

This sequence belongs to the universal ribosomal protein uS14 family. As to quaternary structure, part of the 30S ribosomal subunit. Contacts proteins S3 and S10.

Its function is as follows. Binds 16S rRNA, required for the assembly of 30S particles and may also be responsible for determining the conformation of the 16S rRNA at the A site. The polypeptide is Small ribosomal subunit protein uS14 (Cereibacter sphaeroides (strain ATCC 17029 / ATH 2.4.9) (Rhodobacter sphaeroides)).